The primary structure comprises 99 residues: Small ribosomal subunit protein uS19 (99 aa).

The protein belongs to the universal ribosomal protein uS19 family.

Functionally, protein S19 forms a complex with S13 that binds strongly to the 16S ribosomal RNA. The polypeptide is Small ribosomal subunit protein uS19 (Sulfurihydrogenibium sp. (strain YO3AOP1)).